Here is a 455-residue protein sequence, read N- to C-terminus: Argininosuccinate lyase (455 aa).

Belongs to the lyase 1 family. Argininosuccinate lyase subfamily.

It localises to the cytoplasm. The enzyme catalyses 2-(N(omega)-L-arginino)succinate = fumarate + L-arginine. The protein operates within amino-acid biosynthesis; L-arginine biosynthesis; L-arginine from L-ornithine and carbamoyl phosphate: step 3/3. The sequence is that of Argininosuccinate lyase from Shewanella baltica (strain OS155 / ATCC BAA-1091).